The following is a 361-amino-acid chain: Deoxyhypusine hydroxylase (361 aa).

HEAT-like PBS-type repeat units follow at residues 59 to 85 (LKHE…VLEN), 94 to 120 (VRHE…YMQD), 183 to 211 (QRYR…GFRD), and 216 to 242 (FRHE…RLRD). Residues H61, E62, H96, and E97 each contribute to the Fe cation site. Residues H218, E219, H251, and E252 each coordinate Fe cation.

This sequence belongs to the deoxyhypusine hydroxylase family. Fe(2+) serves as cofactor.

The protein resides in the cytoplasm. It is found in the nucleus. It catalyses the reaction [eIF5A protein]-deoxyhypusine + AH2 + O2 = [eIF5A protein]-hypusine + A + H2O. It participates in protein modification; eIF5A hypusination. Catalyzes the hydroxylation of the N(6)-(4-aminobutyl)-L-lysine intermediate to form hypusine, an essential post-translational modification only found in mature eIF-5A factor. This is Deoxyhypusine hydroxylase from Cryptococcus neoformans var. neoformans serotype D (strain B-3501A) (Filobasidiella neoformans).